A 272-amino-acid polypeptide reads, in one-letter code: HMP-PP phosphatase (272 aa).

The active-site Nucleophile is aspartate 8. Mg(2+) contacts are provided by aspartate 8, aspartate 10, and aspartate 212.

The protein belongs to the HAD-like hydrolase superfamily. Cof family. Mg(2+) is required as a cofactor.

It carries out the reaction 4-amino-2-methyl-5-(diphosphooxymethyl)pyrimidine + H2O = 4-amino-2-methyl-5-(phosphooxymethyl)pyrimidine + phosphate + H(+). In terms of biological role, catalyzes the hydrolysis of 4-amino-2-methyl-5-hydroxymethylpyrimidine pyrophosphate (HMP-PP) to 4-amino-2-methyl-5-hydroxymethylpyrimidine phosphate (HMP-P). The chain is HMP-PP phosphatase from Salmonella choleraesuis (strain SC-B67).